Reading from the N-terminus, the 410-residue chain is Iron-sulfur cluster assembly SufBD family protein MTH1150 homolog (410 aa).

It belongs to the iron-sulfur cluster assembly SufBD family.

This Methanothermobacter thermautotrophicus (strain Winter) (Methanobacterium thermoautotrophicum) protein is Iron-sulfur cluster assembly SufBD family protein MTH1150 homolog.